The primary structure comprises 228 residues: Auxin-responsive protein IAA14 (228 aa).

The EAR-like (transcriptional repression) motif lies at 8 to 12; sequence LCLGL. One can recognise a PB1 domain in the interval 110–210; the sequence is VAFVKVSMDG…SCKRLRIMKG (101 aa).

This sequence belongs to the Aux/IAA family. Homodimers and heterodimers. Interacts with TPL. In terms of tissue distribution, preferentially expressed in roots and flowers.

The protein localises to the nucleus. Functionally, aux/IAA proteins are short-lived transcriptional factors that function as repressors of early auxin response genes at low auxin concentrations. Repression is thought to result from the interaction with auxin response factors (ARFs), proteins that bind to the auxin-responsive promoter element (AuxRE). Formation of heterodimers with ARF proteins may alter their ability to modulate early auxin response genes expression. The sequence is that of Auxin-responsive protein IAA14 (IAA14) from Arabidopsis thaliana (Mouse-ear cress).